Here is a 341-residue protein sequence, read N- to C-terminus: Anthranilate phosphoribosyltransferase (341 aa).

5-phospho-alpha-D-ribose 1-diphosphate contacts are provided by residues Gly83, Ser91, 93 to 96 (NTST), 111 to 115 (KHGNR), and Ser123. Residue Gly83 coordinates anthranilate. Ser95 lines the Mg(2+) pocket. Residue Asn114 participates in anthranilate binding. Arg169 provides a ligand contact to anthranilate. Mg(2+) is bound by residues Asp228 and Glu229.

The protein belongs to the anthranilate phosphoribosyltransferase family. In terms of assembly, homodimer. Mg(2+) serves as cofactor.

The catalysed reaction is N-(5-phospho-beta-D-ribosyl)anthranilate + diphosphate = 5-phospho-alpha-D-ribose 1-diphosphate + anthranilate. It functions in the pathway amino-acid biosynthesis; L-tryptophan biosynthesis; L-tryptophan from chorismate: step 2/5. In terms of biological role, catalyzes the transfer of the phosphoribosyl group of 5-phosphorylribose-1-pyrophosphate (PRPP) to anthranilate to yield N-(5'-phosphoribosyl)-anthranilate (PRA). In Hyphomonas neptunium (strain ATCC 15444), this protein is Anthranilate phosphoribosyltransferase.